A 1376-amino-acid polypeptide reads, in one-letter code: Ubiquitin carboxyl-terminal hydrolase 47 (1376 aa).

Lysine 122 is modified (N6-acetyllysine). Positions 188–564 constitute a USP domain; sequence VGLVNQAMTC…NAYMLIYRLK (377 aa). The active-site Nucleophile is cysteine 197. The disordered stretch occupies residues 426–452; that stretch reads EKSPQTESCTDSGAENEGSCHSDQMSN. Residues 430-452 are compositionally biased toward polar residues; the sequence is QTESCTDSGAENEGSCHSDQMSN. Histidine 503 (proton acceptor) is an active-site residue. Serine 832 is subject to Phosphoserine. Disordered regions lie at residues 835-863, 880-971, and 985-1025; these read SYSK…KGPA, LKSL…SSDT, and GLDS…ESGK. A compositionally biased stretch (low complexity) spans 882-900; sequence SLSLQQQQQDGDNGDSSKS. 2 positions are modified to phosphoserine: serine 911 and serine 934. Positions 930-939 are enriched in polar residues; it reads HIQTSDPENF. Basic and acidic residues predominate over residues 941–951; sequence SEERSDSDVNN. Residues 954–970 are compositionally biased toward low complexity; the sequence is STSSVDSDILSSSHSSD. Positions 998–1007 are enriched in basic and acidic residues; the sequence is KANEGKKETW. Positions 1008–1021 are enriched in acidic residues; that stretch reads DTAEEDSGTDSEYD. A Phosphoserine modification is found at serine 1014. A Phosphothreonine modification is found at threonine 1016. Serine 1018 carries the post-translational modification Phosphoserine.

Belongs to the peptidase C19 family. USP47 subfamily. As to quaternary structure, interacts with BTRC and FBXW11. Interacts with POLB.

Its subcellular location is the cytoplasm. It carries out the reaction Thiol-dependent hydrolysis of ester, thioester, amide, peptide and isopeptide bonds formed by the C-terminal Gly of ubiquitin (a 76-residue protein attached to proteins as an intracellular targeting signal).. Ubiquitin-specific protease that specifically deubiquitinates monoubiquitinated DNA polymerase beta (POLB), stabilizing POLB thereby playing a role in base-excision repair (BER). Acts as a regulator of cell growth and genome integrity. May also indirectly regulate CDC25A expression at a transcriptional level. The sequence is that of Ubiquitin carboxyl-terminal hydrolase 47 (Usp47) from Mus musculus (Mouse).